The chain runs to 442 residues: Yes-associated protein homolog 1 (442 aa).

A compositionally biased stretch (basic residues) spans Met-1–His-10. A disordered region spans residues Met-1 to Ala-84. 2 stretches are compositionally biased toward polar residues: residues Asn-13–Ser-22 and Leu-55–His-71. Ser-104 bears the Phosphoserine mark. Residues Leu-108–Thr-120 are compositionally biased toward polar residues. The segment at Leu-108–Ser-136 is disordered. The span at Pro-124–Ser-134 shows a compositional bias: basic residues. A WW domain is found at Leu-203 to Leu-236.

It belongs to the YAP1 family. Highly divergent. In terms of assembly, interacts (via WW domain) with wts-1 (via N-terminus). Interacts (via WW domain) with egl-44; the interaction may regulate transcription. In terms of tissue distribution, expressed in epithelia, hypodermis, muscles, pharynx, intestine, gonadal sheath cells, vulva, spermatheca and in excretory tissue.

The protein localises to the cytoplasm. It is found in the nucleus. Its subcellular location is the cell projection. The protein resides in the cilium. It localises to the cytoskeleton. The protein localises to the cilium axoneme. Functionally, plays a role in thermal stress response and in aging. The sequence is that of Yes-associated protein homolog 1 from Caenorhabditis elegans.